The following is a 202-amino-acid chain: Large ribosomal subunit protein bL25 (202 aa).

This sequence belongs to the bacterial ribosomal protein bL25 family. CTC subfamily. Part of the 50S ribosomal subunit; part of the 5S rRNA/L5/L18/L25 subcomplex. Contacts the 5S rRNA. Binds to the 5S rRNA independently of L5 and L18.

This is one of the proteins that binds to the 5S RNA in the ribosome where it forms part of the central protuberance. This Paramagnetospirillum magneticum (strain ATCC 700264 / AMB-1) (Magnetospirillum magneticum) protein is Large ribosomal subunit protein bL25.